We begin with the raw amino-acid sequence, 359 residues long: Epoxide hydrolase 4 (359 aa).

A helical; Signal-anchor for type II membrane protein membrane pass occupies residues 15–35 (ALLYWSLVYGYCGLCASVHLL). Positions 92 to 337 (PLMLLLHGFP…ILSEGSHWLQ (246 aa)) constitute an AB hydrolase-1 domain. Aspartate 167 serves as the catalytic Nucleophile. Tyrosine 279 (proton donor) is an active-site residue. The Proton acceptor role is filled by histidine 334.

Belongs to the AB hydrolase superfamily. Epoxide hydrolase family.

The protein localises to the membrane. The protein is Epoxide hydrolase 4 (Ephx4) of Mus musculus (Mouse).